We begin with the raw amino-acid sequence, 254 residues long: Phosphate import ATP-binding protein PstB (254 aa).

The ABC transporter domain maps to methionine 7 to isoleucine 249. Glycine 39–serine 46 is a binding site for ATP.

This sequence belongs to the ABC transporter superfamily. Phosphate importer (TC 3.A.1.7) family. In terms of assembly, the complex is composed of two ATP-binding proteins (PstB), two transmembrane proteins (PstC and PstA) and a solute-binding protein (PstS).

The protein localises to the cell inner membrane. It carries out the reaction phosphate(out) + ATP + H2O = ADP + 2 phosphate(in) + H(+). Its function is as follows. Part of the ABC transporter complex PstSACB involved in phosphate import. Responsible for energy coupling to the transport system. This Chlorobium chlorochromatii (strain CaD3) protein is Phosphate import ATP-binding protein PstB.